The sequence spans 913 residues: Calcium-activated chloride channel regulator 1 (913 aa).

A signal peptide spans 1-21; sequence MGSFKSSVFILVLHLLEGALS. Residues 46 to 199 form a metalloprotease domain region; that stretch reads DETLIQQIKD…DIAGKNVVNH (154 aa). H156 serves as a coordination point for Zn(2+). Residue E157 is part of the active site. Zn(2+) is bound by residues H160 and N167. Residues 306–475 enclose the VWFA domain; the sequence is IVCLVLDKSG…NGLIDAFGAL (170 aa). N503, N514, N770, N804, N810, N836, and N885 each carry an N-linked (GlcNAc...) asparagine glycan.

It belongs to the CLCR family. In terms of processing, glycosylated. The translation product is autoproteolytically cleaved by the metalloprotease domain in the endoplasmic reticulum into a N-terminal and a C-terminal products that remain physically associated with each other. The cleavage is necessary for calcium-activated chloride channel (CaCC) activation activity. In terms of tissue distribution, expressed in mucin-producing cells in the respiratory and intestinal tracts, cutaneous sweat glands, and renal mucous glands (at protein level). Strong overexpression in the airways of horses with recurrent airway obstruction (at protein level).

The protein resides in the secreted. The protein localises to the extracellular space. May be involved in mediating calcium-activated chloride conductance. May play critical roles in goblet cell metaplasia, mucus hypersecretion, cystic fibrosis and AHR. May be involved in the regulation of mucus production and/or secretion by goblet cells. Involved in the regulation of tissue inflammation in the innate immune response. May play a role as a tumor suppressor. Induces MUC5AC. In Equus caballus (Horse), this protein is Calcium-activated chloride channel regulator 1 (CLCA1).